We begin with the raw amino-acid sequence, 217 residues long: Small ribosomal subunit protein uS3 (217 aa).

One can recognise a KH type-2 domain in the interval 38-106 (IRKFLKKRLS…KVTLDIQEVR (69 aa)).

It belongs to the universal ribosomal protein uS3 family. Part of the 30S ribosomal subunit. Forms a tight complex with proteins S10 and S14.

Functionally, binds the lower part of the 30S subunit head. Binds mRNA in the 70S ribosome, positioning it for translation. The sequence is that of Small ribosomal subunit protein uS3 from Desulfotalea psychrophila (strain LSv54 / DSM 12343).